A 505-amino-acid chain; its full sequence is Maturase K (505 aa).

It belongs to the intron maturase 2 family. MatK subfamily.

The protein resides in the plastid. Its subcellular location is the chloroplast. In terms of biological role, usually encoded in the trnK tRNA gene intron. Probably assists in splicing its own and other chloroplast group II introns. The sequence is that of Maturase K from Coffea arabica (Arabian coffee).